Reading from the N-terminus, the 331-residue chain is Small ribosomal subunit protein uS2 (331 aa).

Belongs to the universal ribosomal protein uS2 family.

The sequence is that of Small ribosomal subunit protein uS2 from Rhodopseudomonas palustris (strain BisB5).